Here is a 248-residue protein sequence, read N- to C-terminus: 3-deoxy-manno-octulosonate cytidylyltransferase (248 aa).

This sequence belongs to the KdsB family.

The protein localises to the cytoplasm. It carries out the reaction 3-deoxy-alpha-D-manno-oct-2-ulosonate + CTP = CMP-3-deoxy-beta-D-manno-octulosonate + diphosphate. The protein operates within nucleotide-sugar biosynthesis; CMP-3-deoxy-D-manno-octulosonate biosynthesis; CMP-3-deoxy-D-manno-octulosonate from 3-deoxy-D-manno-octulosonate and CTP: step 1/1. Its pathway is bacterial outer membrane biogenesis; lipopolysaccharide biosynthesis. Its function is as follows. Activates KDO (a required 8-carbon sugar) for incorporation into bacterial lipopolysaccharide in Gram-negative bacteria. This chain is 3-deoxy-manno-octulosonate cytidylyltransferase, found in Chlorobaculum tepidum (strain ATCC 49652 / DSM 12025 / NBRC 103806 / TLS) (Chlorobium tepidum).